The primary structure comprises 265 residues: Tryptophan synthase alpha chain (265 aa).

Residues Glu-49 and Glu-60 each act as proton acceptor in the active site.

It belongs to the TrpA family. As to quaternary structure, tetramer of two alpha and two beta chains.

It carries out the reaction (1S,2R)-1-C-(indol-3-yl)glycerol 3-phosphate + L-serine = D-glyceraldehyde 3-phosphate + L-tryptophan + H2O. It participates in amino-acid biosynthesis; L-tryptophan biosynthesis; L-tryptophan from chorismate: step 5/5. Functionally, the alpha subunit is responsible for the aldol cleavage of indoleglycerol phosphate to indole and glyceraldehyde 3-phosphate. The protein is Tryptophan synthase alpha chain of Herminiimonas arsenicoxydans.